A 210-amino-acid polypeptide reads, in one-letter code: N-(5'-phosphoribosyl)anthranilate isomerase (210 aa).

The protein belongs to the TrpF family.

The catalysed reaction is N-(5-phospho-beta-D-ribosyl)anthranilate = 1-(2-carboxyphenylamino)-1-deoxy-D-ribulose 5-phosphate. Its pathway is amino-acid biosynthesis; L-tryptophan biosynthesis; L-tryptophan from chorismate: step 3/5. The chain is N-(5'-phosphoribosyl)anthranilate isomerase (TRP1) from Eremothecium gossypii (strain ATCC 10895 / CBS 109.51 / FGSC 9923 / NRRL Y-1056) (Yeast).